The primary structure comprises 210 residues: MAEPSGRYQQLPCEEEPEAGPQVAADAPPPYSSIAADSAAFFDYKDDAAFPNPPSYNVATSLPSYDEAERTKTETSVPLVSGRDDDFVARDDFEDADQLRIGNDGIFMLTFFMAFLFNWIGFFLSFCLTTSAAGRYGAISGFGLSLIKWILIVRFSTYFPGYFDGQYWLWWVFLVLGFLLFLRGFINYAKIRKMADSFSTLPRTRVLFIY.

The tract at residues 1 to 31 is disordered; that stretch reads MAEPSGRYQQLPCEEEPEAGPQVAADAPPPY. The Cytoplasmic portion of the chain corresponds to 1 to 105; the sequence is MAEPSGRYQQ…ADQLRIGNDG (105 aa). 2 consecutive short sequence motifs (PPxY motif) follow at residues 30–33 and 53–56; these read PYSS and PPSY. The helical transmembrane segment at 106 to 126 threads the bilayer; the sequence is IFMLTFFMAFLFNWIGFFLSF. Residues 127-132 are Extracellular-facing; that stretch reads CLTTSA. A helical membrane pass occupies residues 133–153; that stretch reads AGRYGAISGFGLSLIKWILIV. The Cytoplasmic segment spans residues 154–161; sequence RFSTYFPG. Residues 162–182 form a helical membrane-spanning segment; it reads YFDGQYWLWWVFLVLGFLLFL. Over 183–210 the chain is Extracellular; the sequence is RGFINYAKIRKMADSFSTLPRTRVLFIY.

Its subcellular location is the golgi apparatus membrane. May play a role in Golgi structure maintenance. This Danio rerio (Zebrafish) protein is NEDD4 family-interacting protein 1-like (ndfip1l).